A 2178-amino-acid polypeptide reads, in one-letter code: DNA-directed RNA polymerase subunit beta (2178 aa).

Insert stretches follow at residues 269–325 (SKKI…TPFV), 714–1508 (KRID…LFYN), and 1703–1900 (KGND…LQPM).

This sequence belongs to the RNA polymerase beta chain family. As to quaternary structure, in plastids the minimal PEP RNA polymerase catalytic core is composed of four subunits: alpha, beta, beta', and beta''. When a (nuclear-encoded) sigma factor is associated with the core the holoenzyme is formed, which can initiate transcription.

The protein resides in the plastid. It is found in the chloroplast. The enzyme catalyses RNA(n) + a ribonucleoside 5'-triphosphate = RNA(n+1) + diphosphate. Its function is as follows. DNA-dependent RNA polymerase catalyzes the transcription of DNA into RNA using the four ribonucleoside triphosphates as substrates. The polypeptide is DNA-directed RNA polymerase subunit beta (Tupiella akineta (Green alga)).